The sequence spans 445 residues: 3-phosphoshikimate 1-carboxyvinyltransferase (445 aa).

3-phosphoshikimate contacts are provided by lysine 28, serine 29, and arginine 33. Lysine 28 provides a ligand contact to phosphoenolpyruvate. Phosphoenolpyruvate contacts are provided by glycine 101 and arginine 129. 3-phosphoshikimate contacts are provided by serine 175, glutamine 177, aspartate 328, and lysine 355. Glutamine 177 contributes to the phosphoenolpyruvate binding site. The active-site Proton acceptor is aspartate 328. Residues arginine 359 and arginine 402 each coordinate phosphoenolpyruvate.

It belongs to the EPSP synthase family. In terms of assembly, monomer.

It localises to the cytoplasm. The catalysed reaction is 3-phosphoshikimate + phosphoenolpyruvate = 5-O-(1-carboxyvinyl)-3-phosphoshikimate + phosphate. It participates in metabolic intermediate biosynthesis; chorismate biosynthesis; chorismate from D-erythrose 4-phosphate and phosphoenolpyruvate: step 6/7. Catalyzes the transfer of the enolpyruvyl moiety of phosphoenolpyruvate (PEP) to the 5-hydroxyl of shikimate-3-phosphate (S3P) to produce enolpyruvyl shikimate-3-phosphate and inorganic phosphate. This Rhodopseudomonas palustris (strain BisA53) protein is 3-phosphoshikimate 1-carboxyvinyltransferase.